The primary structure comprises 437 residues: uncharacterized protein (437 aa).

Composition is skewed to basic residues over residues 1–29, 81–91, and 101–118; these read MDTPLRGRRAAGRGVRARARPRTRRRHRN, LRGRHPRVRRV, and RRRHLLRRRVGGHRGRNR. 2 disordered regions span residues 1–31 and 77–437; these read MDTPLRGRRAAGRGVRARARPRTRRRHRNDH and EHVP…QGTR. The span at 119–132 shows a compositional bias: basic and acidic residues; sequence HAGDRRAPGVDSRL. Basic residues predominate over residues 133–142; sequence RQQHQHPRGR. Basic and acidic residues predominate over residues 143–164; it reads HASDRVQDGAHPRRQRLREQPR. The segment covering 165 to 190 has biased composition (basic residues); that stretch reads HAGRPRRRQPPRRGRSRGTHRRHLRQ. 2 stretches are compositionally biased toward basic and acidic residues: residues 198-209 and 217-253; these read GPDEDQAREFRG and HPPTARDVLRGEPGHGDGHHLEGRRGRPRPQGREAGR. 2 stretches are compositionally biased toward basic residues: residues 284–293 and 324–348; these read TVHRGGRLRG and PHSRKRRDTGAHHRHWRRRRRRVRH. Residues 371-382 are compositionally biased toward low complexity; sequence DAAAYASVPAHA.

This is an uncharacterized protein from Haloferax lucentense (strain DSM 14919 / JCM 9276 / NCIMB 13854 / Aa 2.2) (Haloferax alicantei).